Reading from the N-terminus, the 65-residue chain is Large ribosomal subunit protein bL28 (65 aa).

The protein belongs to the bacterial ribosomal protein bL28 family.

The polypeptide is Large ribosomal subunit protein bL28 (Pseudothermotoga lettingae (strain ATCC BAA-301 / DSM 14385 / NBRC 107922 / TMO) (Thermotoga lettingae)).